Consider the following 207-residue polypeptide: ATP-dependent Clp protease proteolytic subunit (207 aa).

Serine 111 (nucleophile) is an active-site residue. Histidine 136 is an active-site residue.

The protein belongs to the peptidase S14 family. As to quaternary structure, fourteen ClpP subunits assemble into 2 heptameric rings which stack back to back to give a disk-like structure with a central cavity, resembling the structure of eukaryotic proteasomes.

Its subcellular location is the cytoplasm. The enzyme catalyses Hydrolysis of proteins to small peptides in the presence of ATP and magnesium. alpha-casein is the usual test substrate. In the absence of ATP, only oligopeptides shorter than five residues are hydrolyzed (such as succinyl-Leu-Tyr-|-NHMec, and Leu-Tyr-Leu-|-Tyr-Trp, in which cleavage of the -Tyr-|-Leu- and -Tyr-|-Trp bonds also occurs).. Its function is as follows. Cleaves peptides in various proteins in a process that requires ATP hydrolysis. Has a chymotrypsin-like activity. Plays a major role in the degradation of misfolded proteins. The protein is ATP-dependent Clp protease proteolytic subunit of Psychromonas ingrahamii (strain DSM 17664 / CCUG 51855 / 37).